Consider the following 227-residue polypeptide: Urease accessory protein UreF (227 aa).

It belongs to the UreF family. In terms of assembly, ureD, UreF and UreG form a complex that acts as a GTP-hydrolysis-dependent molecular chaperone, activating the urease apoprotein by helping to assemble the nickel containing metallocenter of UreC. The UreE protein probably delivers the nickel.

The protein resides in the cytoplasm. Its function is as follows. Required for maturation of urease via the functional incorporation of the urease nickel metallocenter. This is Urease accessory protein UreF from Actinobacillus pleuropneumoniae serotype 5b (strain L20).